The following is a 293-amino-acid chain: Bifunctional protein FolD 1 (293 aa).

NADP(+)-binding positions include 174–176 (GRS) and Thr240.

The protein belongs to the tetrahydrofolate dehydrogenase/cyclohydrolase family. In terms of assembly, homodimer.

It catalyses the reaction (6R)-5,10-methylene-5,6,7,8-tetrahydrofolate + NADP(+) = (6R)-5,10-methenyltetrahydrofolate + NADPH. The enzyme catalyses (6R)-5,10-methenyltetrahydrofolate + H2O = (6R)-10-formyltetrahydrofolate + H(+). The protein operates within one-carbon metabolism; tetrahydrofolate interconversion. In terms of biological role, catalyzes the oxidation of 5,10-methylenetetrahydrofolate to 5,10-methenyltetrahydrofolate and then the hydrolysis of 5,10-methenyltetrahydrofolate to 10-formyltetrahydrofolate. The protein is Bifunctional protein FolD 1 of Saccharopolyspora erythraea (strain ATCC 11635 / DSM 40517 / JCM 4748 / NBRC 13426 / NCIMB 8594 / NRRL 2338).